The primary structure comprises 574 residues: Glycine--tRNA ligase (574 aa).

The substrate site is built by R96 and E162. ATP contacts are provided by residues 194–196 (RNE), 204–209 (IRLREF), 327–328 (EC), and 450–453 (GIDR). 209–213 (FTQAE) serves as a coordination point for substrate. 446 to 450 (EPSYG) provides a ligand contact to substrate.

It belongs to the class-II aminoacyl-tRNA synthetase family.

Its subcellular location is the cytoplasm. The enzyme catalyses tRNA(Gly) + glycine + ATP = glycyl-tRNA(Gly) + AMP + diphosphate. Functionally, catalyzes the attachment of glycine to tRNA(Gly). The protein is Glycine--tRNA ligase of Methanococcus maripaludis (strain C6 / ATCC BAA-1332).